Reading from the N-terminus, the 283-residue chain is MDLWPGAWMLLLLLFLLLLFLLPTLWFCSPSAKYFFKMAFYNGWILFLAVLAIPVCAVRGRNVENMKILRLMLLHIKYLYGIRVEVRGAHHFPPSQPYVVVSNHQSSLDLLGMMEVLPGRCVPIAKRELLWAGSAGLACWLAGVIFIDRKRTGDAISVMSEVAQTLLTQDVRVWVFPEGTRNHNGSMLPFKRGAFHLAVQAQVPIVPIVMSSYQDFYCKKERRFTSGQCQVRVLPPVPTEGLTPDDVPALADRVRHSMLTVFREISTDGRGGGDYLKKPGGGG.

A signal peptide spans 1-26 (MDLWPGAWMLLLLLFLLLLFLLPTLW). The Lumenal portion of the chain corresponds to 27–37 (FCSPSAKYFFK). A helical transmembrane segment spans residues 38 to 58 (MAFYNGWILFLAVLAIPVCAV). At 59–127 (RGRNVENMKI…PGRCVPIAKR (69 aa)) the chain is on the cytoplasmic side. Positions 104-109 (HQSSLD) match the HXXXXD motif motif. The helical transmembrane segment at 128–148 (ELLWAGSAGLACWLAGVIFID) threads the bilayer. Over 149–283 (RKRTGDAISV…DYLKKPGGGG (135 aa)) the chain is Lumenal. Positions 178–181 (EGTR) match the EGTR motif motif.

This sequence belongs to the 1-acyl-sn-glycerol-3-phosphate acyltransferase family. Widely expressed. Expressed in adipose tissue and at high levels in testis and pancreas. Expressed at lower levels in tissues such as heart, brain, placenta, kidney, lung, spleen, thymus, prostate, ovary, intestine, colon, leukocyte and liver.

It localises to the endoplasmic reticulum membrane. It catalyses the reaction a 1-acyl-sn-glycero-3-phosphate + an acyl-CoA = a 1,2-diacyl-sn-glycero-3-phosphate + CoA. The enzyme catalyses 1-(9Z-octadecenoyl)-sn-glycero-3-phosphate + (9Z)-octadecenoyl-CoA = 1,2-di-(9Z-octadecenoyl)-sn-glycero-3-phosphate + CoA. It carries out the reaction 1-(9Z-octadecenoyl)-sn-glycero-3-phosphate + hexadecanoyl-CoA = 1-(9Z)-octadecenoyl-2-hexadecanoyl-sn-glycero-3-phosphate + CoA. The catalysed reaction is heptadecanoyl-CoA + 1-(9Z-octadecenoyl)-sn-glycero-3-phosphate = 1-(9Z)-octadecenoyl-2-heptadecanoyl-sn-glycero-3-phosphate + CoA. It catalyses the reaction 1-(9Z-octadecenoyl)-sn-glycero-3-phosphate + octadecanoyl-CoA = 1-(9Z-octadecenoyl)-2-octadecanoyl-sn-glycero-3-phosphate + CoA. The enzyme catalyses 1-(9Z-octadecenoyl)-sn-glycero-3-phosphate + (9Z,12Z)-octadecadienoyl-CoA = 1-(9Z)-octadecenoyl-2-(9Z,12Z)-octadecadienoyl-sn-glycero-3-phosphate + CoA. It carries out the reaction 1-(9Z-octadecenoyl)-sn-glycero-3-phosphate + tetradecanoyl-CoA = 1-(9Z)-octadecenoyl-2-tetradecanoyl-sn-glycero-3-phosphate + CoA. The catalysed reaction is pentadecanoyl-CoA + 1-(9Z-octadecenoyl)-sn-glycero-3-phosphate = 1-(9Z)-octadecenoyl-2-pentadecanoyl-sn-glycero-3-phosphate + CoA. It catalyses the reaction 1-hexadecanoyl-sn-glycero-3-phosphate + (9Z)-octadecenoyl-CoA = 1-hexadecanoyl-2-(9Z-octadecenoyl)-sn-glycero-3-phosphate + CoA. The enzyme catalyses 1-(9Z,12Z,15Z)-octadecatrienoyl-sn-glycero-3-phosphate + (9Z)-octadecenoyl-CoA = 1-(9Z,12Z,15Z)-octadecatrienoyl-2-(9Z)-octadecenoyl-sn-glycero-3-phosphate + CoA. It carries out the reaction 1-(6Z,9Z,12Z-octadecatrienoyl)-sn-glycero-3-phosphate + (9Z)-octadecenoyl-CoA = (6Z,9Z,12Z)-octadecatrienoyl-2-(9Z)-octadecenoyl-sn-glycero-3-phosphate + CoA. The catalysed reaction is 1-eicosanoyl-sn-glycero-3-phosphate + (9Z)-octadecenoyl-CoA = 1-eicosanoyl-2-(9Z)-octadecenoyl-sn-glycero-3-phosphate + CoA. It catalyses the reaction 1-tetradecanoyl-sn-glycerol 3-phosphate + (9Z)-octadecenoyl-CoA = 1-tetradecanoyl-2-(9Z)-octadecenoyl-sn-glycero-3-phosphate + CoA. The enzyme catalyses 1-(9Z-octadecenoyl)-sn-glycero-3-phosphate + (5Z,8Z,11Z,14Z)-eicosatetraenoyl-CoA = 1-(9Z)-octadecenoyl-2-(5Z,8Z,11Z,14Z)-eicosatetraenoyl-sn-glycero-3-phosphate + CoA. It carries out the reaction 1-(9Z-octadecenoyl)-sn-glycero-3-phosphate + dodecanoyl-CoA = 1-(9Z)-octadecenoyl-2-dodecanoyl-sn-glycero-3-phosphate + CoA. The catalysed reaction is (6Z)-octadecenoyl-CoA + 1-(9Z-octadecenoyl)-sn-glycero-3-phosphate = 1-(9Z)-octadecenoyl-2-(6Z)-octadecenoyl-sn-glycero-3-phosphate + CoA. It catalyses the reaction (11Z)-octadecenoyl-CoA + 1-(9Z-octadecenoyl)-sn-glycero-3-phosphate = 1-(9Z)-octadecenoyl-2-(11Z)-octadecenoyl-sn-glycero-3-phosphate + CoA. The enzyme catalyses (9Z)-hexadecenoyl-CoA + 1-(9Z-octadecenoyl)-sn-glycero-3-phosphate = 1-(9Z-octadecenoyl)-2-(9Z-hexadecenoyl)-sn-glycero-3-phosphate + CoA. It participates in phospholipid metabolism; CDP-diacylglycerol biosynthesis; CDP-diacylglycerol from sn-glycerol 3-phosphate: step 2/3. In terms of biological role, converts 1-acyl-sn-glycerol-3-phosphate (lysophosphatidic acid or LPA) into 1,2-diacyl-sn-glycerol-3-phosphate (phosphatidic acid or PA) by incorporating an acyl moiety at the sn-2 position of the glycerol backbone. The sequence is that of 1-acyl-sn-glycerol-3-phosphate acyltransferase alpha (AGPAT1) from Homo sapiens (Human).